Here is a 141-residue protein sequence, read N- to C-terminus: Eukaryotic translation initiation factor 1A (141 aa).

Basic residues predominate over residues 1 to 15 (MPKNKGKGGKNRRRG). The segment at 1–28 (MPKNKGKGGKNRRRGKNENEQKRELQFK) is disordered. Residues 16–28 (KNENEQKRELQFK) show a composition bias toward basic and acidic residues. Residues 21–95 (QKRELQFKEE…DKADVILRYN (75 aa)) enclose the S1-like domain.

This sequence belongs to the eIF-1A family.

Its function is as follows. Seems to be required for maximal rate of protein biosynthesis. Enhances ribosome dissociation into subunits and stabilizes the binding of the initiator Met-tRNA(I) to 40 S ribosomal subunits. The sequence is that of Eukaryotic translation initiation factor 1A (eif1a) from Dictyostelium discoideum (Social amoeba).